Here is a 97-residue protein sequence, read N- to C-terminus: Coiled-coil domain-containing protein 167 (97 aa).

Residues 36 to 80 (LRKMELTEEGRKSLEKEKSSLSSRLSNYERELKSLRHENRKNMLL) are a coiled coil. Residues 78 to 95 (MLLSVAIFLLFAVGYYCW) form a helical membrane-spanning segment.

It is found in the membrane. The chain is Coiled-coil domain-containing protein 167 (ccdc167) from Xenopus tropicalis (Western clawed frog).